The sequence spans 101 residues: Small ribosomal subunit protein uS10 (101 aa).

It belongs to the universal ribosomal protein uS10 family. In terms of assembly, part of the 30S ribosomal subunit.

Involved in the binding of tRNA to the ribosomes. The chain is Small ribosomal subunit protein uS10 from Corynebacterium urealyticum (strain ATCC 43042 / DSM 7109).